The following is a 314-amino-acid chain: (+)-neomenthol dehydrogenase (314 aa).

An NADP(+)-binding site is contributed by 13–36 (VTGGNKGIGYETCRQLASKGVVVV). Position 183 (Ser183) interacts with substrate. The active-site Proton acceptor is the Tyr239.

The protein belongs to the short-chain dehydrogenases/reductases (SDR) family. As to quaternary structure, monomer. In terms of tissue distribution, expressed in flowers and red fruit tissues. Not detected in leaves, stems, roots or green fruits.

It carries out the reaction (+)-neomenthol + NADP(+) = (1R,4S)-menthone + NADPH + H(+). Involved in basal resistance against pathogens. The protein is (+)-neomenthol dehydrogenase (MNR1) of Capsicum annuum (Capsicum pepper).